Here is a 388-residue protein sequence, read N- to C-terminus: Putative 8-amino-7-oxononanoate synthase (388 aa).

A substrate-binding site is contributed by arginine 22. Position 109 to 110 (109 to 110) interacts with pyridoxal 5'-phosphate; it reads GY. Histidine 134 contacts substrate. Pyridoxal 5'-phosphate is bound by residues serine 182, 207 to 210, and 237 to 240; these read DEAH and TLSK. Residue lysine 240 is modified to N6-(pyridoxal phosphate)lysine. Position 354 (threonine 354) interacts with substrate.

The protein belongs to the class-II pyridoxal-phosphate-dependent aminotransferase family. BioF subfamily. As to quaternary structure, homodimer. Pyridoxal 5'-phosphate is required as a cofactor.

It catalyses the reaction 6-carboxyhexanoyl-[ACP] + L-alanine + H(+) = (8S)-8-amino-7-oxononanoate + holo-[ACP] + CO2. Its pathway is cofactor biosynthesis; biotin biosynthesis. Its function is as follows. Catalyzes the decarboxylative condensation of pimeloyl-[acyl-carrier protein] and L-alanine to produce 8-amino-7-oxononanoate (AON), [acyl-carrier protein], and carbon dioxide. This Gloeobacter violaceus (strain ATCC 29082 / PCC 7421) protein is Putative 8-amino-7-oxononanoate synthase (bioF).